The following is a 507-amino-acid chain: MGLPWYRVHTVVLNDPGRLISVHLMHTALVAGWAGSMALYELAIFDSSDAVLNPMWRQGMFVLPFMARLGVTSSWNGWSVTGETGLDPGFWSFEGVAAAHIVLSGLLFLAAVWHWVFWDLELFVDPRTGESALDLPKMFGIHLFLSGLLCFGFGAFHLTGVWGPGMWVSDPYGLTGHVQPVAPEWGPAGFNPFNPGGVVAHHIAAGIVGIIAGLFHLTVRPPERLYKALRMGNIETVLSSSIAAVFFAAFVVAGTMWYGNATTPIELFGPTRYQWDKGYFQEEIQRRVDSQLAEGASLSEAWSTIPEKLAFYDYVGNSPAKGGLFRTGAMNSGDGIAQEWIGHPIFKDKEGRELEVRRMPNFFETFPVIMTDADGVVRADIPFRRSESKFSVEQTGVTVSFYGGALDGQTFSNPSDVKKFARKAQLGEGFDFDTETFNSDGVFRTSPRGWFTFGHAVFALLFFFGHIWHGSRTLFRDVFAGVDPGLEEQVEFGVFAKVGDLSTRKEA.

Over 2-16 (GLPWYRVHTVVLNDP) the chain is Cytoplasmic. The helical transmembrane segment at 17–39 (GRLISVHLMHTALVAGWAGSMAL) threads the bilayer. The Lumenal, thylakoid segment spans residues 40 to 94 (YELAIFDSSDAVLNPMWRQGMFVLPFMARLGVTSSWNGWSVTGETGLDPGFWSFE). Residues 95-116 (GVAAAHIVLSGLLFLAAVWHWV) form a helical membrane-spanning segment. Over 117 to 134 (FWDLELFVDPRTGESALD) the chain is Cytoplasmic. The helical transmembrane segment at 135–159 (LPKMFGIHLFLSGLLCFGFGAFHLT) threads the bilayer. Residues 160–196 (GVWGPGMWVSDPYGLTGHVQPVAPEWGPAGFNPFNPG) are Lumenal, thylakoid-facing. A helical transmembrane segment spans residues 197–218 (GVVAHHIAAGIVGIIAGLFHLT). Topologically, residues 219 to 233 (VRPPERLYKALRMGN) are cytoplasmic. The chain crosses the membrane as a helical span at residues 234-255 (IETVLSSSIAAVFFAAFVVAGT). Topologically, residues 256–450 (MWYGNATTPI…GVFRTSPRGW (195 aa)) are lumenal, thylakoid. Residues 451 to 474 (FTFGHAVFALLFFFGHIWHGSRTL) form a helical membrane-spanning segment. Topologically, residues 475 to 507 (FRDVFAGVDPGLEEQVEFGVFAKVGDLSTRKEA) are cytoplasmic.

It belongs to the PsbB/PsbC family. PsbB subfamily. PSII is composed of 1 copy each of membrane proteins PsbA, PsbB, PsbC, PsbD, PsbE, PsbF, PsbH, PsbI, PsbJ, PsbK, PsbL, PsbM, PsbT, PsbX, Psb30/Ycf12, peripheral proteins PsbO, CyanoQ (PsbQ), PsbU, PsbV and a large number of cofactors. It forms dimeric complexes. Contacts PsbQ. Requires Binds multiple chlorophylls. PSII binds additional chlorophylls, carotenoids and specific lipids. as cofactor.

The protein localises to the cellular thylakoid membrane. Functionally, one of the components of the core complex of photosystem II (PSII). It binds chlorophyll and helps catalyze the primary light-induced photochemical processes of PSII. PSII is a light-driven water:plastoquinone oxidoreductase, using light energy to abstract electrons from H(2)O, generating O(2) and a proton gradient subsequently used for ATP formation. This chain is Photosystem II CP47 reaction center protein, found in Synechocystis sp. (strain ATCC 27184 / PCC 6803 / Kazusa).